Here is a 399-residue protein sequence, read N- to C-terminus: MVCLKTLSVFLAAFAVADARAVFKTQSNKNGEMIADNYIVVMKDGVSHDDFKAHVSSVASIHTTNKAKRGTNTAGMKREFDIMNWRGYHGHFDRDTLEEILNDSKVSYVEQDQVVRISGLTTQRSAPSWGLGRVSHRRAGSRDYVFDDSAGRGVTIYGVDTGIDIRHQDFGGRARWGTNTADRDNADRHGHGTHTASTFAGTAFGIAKNANIVAVKVLGSDGSGSTSGIIAGINYCVQDAQQRGILGKAAMNLSLGGGFSQANNDAVTRAQNAGIFVAVAAGNDNRDARAYSPASAPAVCTVASSTIQDSKSSFSNWGSIVDIYAPGSDIIAARPGGGSQSMSGTSMASPHVAGMGAYLIGMGADPRRVCDQLKQLSTPAISNPGSGTTNRLLYNGSGQ.

Residues 1–19 (MVCLKTLSVFLAAFAVADA) form the signal peptide. A propeptide spanning residues 20–118 (RAVFKTQSNK…VEQDQVVRIS (99 aa)) is cleaved from the precursor. Positions 38 to 117 (YIVVMKDGVS…YVEQDQVVRI (80 aa)) constitute an Inhibitor I9 domain. In terms of domain architecture, Peptidase S8 spans 128-399 (SWGLGRVSHR…NRLLYNGSGQ (272 aa)). Residues Asp160 and His191 each act as charge relay system in the active site. Asn252 carries N-linked (GlcNAc...) asparagine glycosylation. Ser346 (charge relay system) is an active-site residue. Residues 380-392 (AISNPGSGTTNRL) are compositionally biased toward polar residues. Residues 380-399 (AISNPGSGTTNRLLYNGSGQ) form a disordered region. The N-linked (GlcNAc...) asparagine glycan is linked to Asn395.

The protein belongs to the peptidase S8 family.

The protein resides in the secreted. Its function is as follows. Secreted subtilisin-like serine protease with keratinolytic activity that contributes to pathogenicity. The polypeptide is Subtilisin-like protease 4 (SUB4) (Arthroderma gypseum (strain ATCC MYA-4604 / CBS 118893) (Microsporum gypseum)).